The sequence spans 269 residues: Tryptophan synthase alpha chain (269 aa).

Active-site proton acceptor residues include glutamate 49 and aspartate 60.

This sequence belongs to the TrpA family. Tetramer of two alpha and two beta chains.

It catalyses the reaction (1S,2R)-1-C-(indol-3-yl)glycerol 3-phosphate + L-serine = D-glyceraldehyde 3-phosphate + L-tryptophan + H2O. It functions in the pathway amino-acid biosynthesis; L-tryptophan biosynthesis; L-tryptophan from chorismate: step 5/5. In terms of biological role, the alpha subunit is responsible for the aldol cleavage of indoleglycerol phosphate to indole and glyceraldehyde 3-phosphate. This is Tryptophan synthase alpha chain from Actinobacillus pleuropneumoniae serotype 5b (strain L20).